The chain runs to 464 residues: mRNA capping enzyme LEF-4 (464 aa).

The mRNA triphosphatase stretch occupies residues 1 to 204 (MDYGDFVIEK…NVMCNIIADM (204 aa)). Residues 205 to 464 (EALTDAQNIS…KHRRDRIVPN (260 aa)) are mRNA guanylyltransferase. Lys255 (N6-GMP-lysine intermediate) is an active-site residue.

It belongs to the baculoviridae LEF-4 family. Interacts with LEF-8, LEF-9, and p47.

The protein localises to the host cytoplasm. It is found in the host nucleus. The catalysed reaction is a 5'-end diphospho-ribonucleoside in mRNA + GTP + H(+) = a 5'-end (5'-triphosphoguanosine)-ribonucleoside in mRNA + diphosphate. It carries out the reaction a 5'-end triphospho-ribonucleoside in mRNA + H2O = a 5'-end diphospho-ribonucleoside in mRNA + phosphate + H(+). Its function is as follows. Component of the viral DNA-dependent RNA polymerase that catalyzes two reactions involved in viral RNA cap formation: an RNA 5'-triphosphatase that hydrolyzes the gamma phosphate of triphosphate-terminated RNA and a guanylyltransferase that reacts with GTP to form a covalent protein-guanylate adduct. Therefore plays an essential role in late and very late gene expression. This is mRNA capping enzyme LEF-4 (LEF-4) from Autographa californica nuclear polyhedrosis virus (AcMNPV).